A 600-amino-acid polypeptide reads, in one-letter code: Jacalin-related lectin 18 (600 aa).

Jacalin-type lectin domains lie at 12-158 (TQRL…YFTC), 161-303 (PTRM…YFTT), 304-447 (SPFI…YFRL), and 454-597 (GEKV…HVLP).

It belongs to the jacalin lectin family.

The protein is Jacalin-related lectin 18 (JAL18) of Arabidopsis thaliana (Mouse-ear cress).